A 562-amino-acid chain; its full sequence is MAASAFLLIASFMLVLLLLARPLGSFLARLIEGEPLPALRRVEAAVWRCCGNTTAEMNWWQYALAILWFNLLGLALLFALLMTQGSLPLNPQGFPGLSWDLAFNTAVSFVTNTNWQAYSGESTLSYLSQMAGLAVQNFLSAATGIAVAFALIRAFTRRSSATIGNAWIDVFRITLYVLLPISLLIALFFVSQGTLQNFLPYLHISTLEGAQQTLPMGPVASQEAIKMLGTNGGGFFGVNSAHPFENPTVLTNFVQMLAIFLIPCALCFSFGQVAGENRQGHALIWAMSLIFVVAVVVVMYAELAGNPHLSELGSASNINMEGKESRFGILATSMFSVVTTAASCGAVNAMHDSFTALGGMVPMWLMQIGEVVFGGVGSGLYGMLLFVLLTVFIAGLMIGRTPEYLGKKIDVYDMKMTALAILVTPTLVLLGSALAISTDVGRAGILNPGAHGFSEVLYALSSAANNNGSAFGGLSVNTPFYNLLLAFAMFVGRFGVILPVLAIAGSLCAKKRQPAGNGTLPTYGPLFIGLLVGTVLLVGALTFVPALALGPVAEHLQLWLTK.

Transmembrane regions (helical) follow at residues 6–26 (FLLI…LGSF), 62–82 (YALA…ALLM), 132–152 (GLAV…FALI), 170–190 (VFRI…LFFV), 253–273 (FVQM…FGQV), 283–303 (LIWA…YAEL), 327–347 (FGIL…CGAV), 356–376 (ALGG…FGGV), 379–399 (GLYG…LMIG), 416–436 (MTAL…ALAI), 483–503 (LLLA…VLAI), and 526–546 (LFIG…FVPA).

The protein belongs to the KdpA family. As to quaternary structure, the system is composed of three essential subunits: KdpA, KdpB and KdpC.

The protein localises to the cell inner membrane. Part of the high-affinity ATP-driven potassium transport (or Kdp) system, which catalyzes the hydrolysis of ATP coupled with the electrogenic transport of potassium into the cytoplasm. This subunit binds the periplasmic potassium ions and delivers the ions to the membrane domain of KdpB through an intramembrane tunnel. This is Potassium-transporting ATPase potassium-binding subunit from Serratia proteamaculans (strain 568).